The chain runs to 293 residues: uncharacterized protein (293 aa).

Disordered regions lie at residues 1–114 (MFLR…IPKL) and 268–293 (EETA…GRML). A phosphoserine mark is found at S34, S35, and S89. 2 stretches are compositionally biased toward basic and acidic residues: residues 73–95 (SSRD…RDKT) and 277–293 (GQER…GRML).

This is an uncharacterized protein from Mus musculus (Mouse).